The sequence spans 151 residues: Small ribosomal subunit protein uS15 (151 aa).

Over residues 1-16 the composition is skewed to basic residues; sequence MPHRSRHKKGRSRSVR. The interval 1–21 is disordered; that stretch reads MPHRSRHKKGRSRSVRPAHPT.

It belongs to the universal ribosomal protein uS15 family. As to quaternary structure, part of the 30S ribosomal subunit.

This chain is Small ribosomal subunit protein uS15, found in Pyrobaculum islandicum (strain DSM 4184 / JCM 9189 / GEO3).